The following is a 294-amino-acid chain: HTH-type transcriptional regulator DgdR (294 aa).

An HTH lysR-type domain is found at 14 to 70 (LEIDLLRSFVVIAEVRALSRAAARVGRTQSALSQQMKRLEDIVDQPLFQRTGRGVVL). Positions 31–50 (LSRAAARVGRTQSALSQQMK) form a DNA-binding region, H-T-H motif.

Belongs to the LysR transcriptional regulatory family.

This is HTH-type transcriptional regulator DgdR (dgdR) from Burkholderia cepacia (Pseudomonas cepacia).